The sequence spans 319 residues: Annexin A4 (319 aa).

A Phosphothreonine modification is found at Thr7. Phosphoserine is present on Ser12. 4 Annexin repeats span residues 14–85 (FNAT…GMMT), 86–157 (PTVL…SLTA), 169–241 (ALVR…AIVK), and 245–316 (NKPA…ILCG). An N6-acetyllysine mark is found at Lys213, Lys293, and Lys300.

It belongs to the annexin family.

Its subcellular location is the zymogen granule membrane. Functionally, calcium/phospholipid-binding protein which promotes membrane fusion and is involved in exocytosis. The sequence is that of Annexin A4 (Anxa4) from Rattus norvegicus (Rat).